The chain runs to 436 residues: Methylenetetrahydrofolate--tRNA-(uracil-5-)-methyltransferase TrmFO (436 aa).

Residue 8–13 (GGGLAG) participates in FAD binding.

This sequence belongs to the MnmG family. TrmFO subfamily. FAD serves as cofactor.

The protein resides in the cytoplasm. The catalysed reaction is uridine(54) in tRNA + (6R)-5,10-methylene-5,6,7,8-tetrahydrofolate + NADH + H(+) = 5-methyluridine(54) in tRNA + (6S)-5,6,7,8-tetrahydrofolate + NAD(+). It catalyses the reaction uridine(54) in tRNA + (6R)-5,10-methylene-5,6,7,8-tetrahydrofolate + NADPH + H(+) = 5-methyluridine(54) in tRNA + (6S)-5,6,7,8-tetrahydrofolate + NADP(+). In terms of biological role, catalyzes the folate-dependent formation of 5-methyl-uridine at position 54 (M-5-U54) in all tRNAs. The polypeptide is Methylenetetrahydrofolate--tRNA-(uracil-5-)-methyltransferase TrmFO (Syntrophomonas wolfei subsp. wolfei (strain DSM 2245B / Goettingen)).